Here is an 818-residue protein sequence, read N- to C-terminus: Protocadherin beta-1 (818 aa).

Positions 1 to 28 (MAGTRRKSLQNRQVGSLLIFLCISVGDA) are cleaved as a signal peptide. Residues 29–691 (TTIRYSVAEE…RKVNPSTKYL (663 aa)) lie on the Extracellular side of the membrane. Cadherin domains follow at residues 35–133 (VAEE…APVF), 138–242 (PLLK…VPQF), 243–347 (SRLV…PPEV), 348–452 (MVSS…PPIF), and 457–562 (YILT…RPMI). 4 N-linked (GlcNAc...) asparagine glycosylation sites follow: N169, N209, N257, and N419. A glycan (N-linked (GlcNAc...) asparagine) is linked at N568. The Cadherin 6 domain maps to 577–672 (VPRSAEAGYL…LVDGFSEPYL (96 aa)). A helical membrane pass occupies residues 692 to 712 (VISLVILSFLFLLSVIVIFII). The Cytoplasmic segment spans residues 713-818 (HVYQKIKYRE…GHDQVSDDYM (106 aa)). Residues 789–818 (MEAGSSLPPNSDRNKSQRLEGHDQVSDDYM) form a disordered region. Basic and acidic residues predominate over residues 800–818 (DRNKSQRLEGHDQVSDDYM).

Its subcellular location is the cell membrane. Its function is as follows. Potential calcium-dependent cell-adhesion protein. May be involved in the establishment and maintenance of specific neuronal connections in the brain. This chain is Protocadherin beta-1 (PCDHB1), found in Homo sapiens (Human).